The primary structure comprises 111 residues: Prophage-derived-like uncharacterized protein YozM (111 aa).

The first 24 residues, 1-24 (MKKRLIGFLVLVPALIMWGITLIE), serve as a signal peptide directing secretion.

The chain is Prophage-derived-like uncharacterized protein YozM (yozM) from Bacillus subtilis (strain 168).